The sequence spans 174 residues: Endoribonuclease YbeY (174 aa).

Zn(2+)-binding residues include histidine 129, histidine 133, and histidine 139.

Belongs to the endoribonuclease YbeY family. It depends on Zn(2+) as a cofactor.

The protein resides in the cytoplasm. Single strand-specific metallo-endoribonuclease involved in late-stage 70S ribosome quality control and in maturation of the 3' terminus of the 16S rRNA. This chain is Endoribonuclease YbeY, found in Lactobacillus delbrueckii subsp. bulgaricus (strain ATCC 11842 / DSM 20081 / BCRC 10696 / JCM 1002 / NBRC 13953 / NCIMB 11778 / NCTC 12712 / WDCM 00102 / Lb 14).